Reading from the N-terminus, the 208-residue chain is Guanylate kinase (208 aa).

The Guanylate kinase-like domain occupies 5–184 (GLLIVFSGPS…AAERVKCVIE (180 aa)). 12-19 (GPSGVGKG) is a binding site for ATP.

Belongs to the guanylate kinase family.

It localises to the cytoplasm. The enzyme catalyses GMP + ATP = GDP + ADP. Functionally, essential for recycling GMP and indirectly, cGMP. The polypeptide is Guanylate kinase (Streptococcus pneumoniae (strain ATCC BAA-255 / R6)).